We begin with the raw amino-acid sequence, 367 residues long: Glutamate 5-kinase (367 aa).

An ATP-binding site is contributed by lysine 10. Substrate is bound by residues serine 50, aspartate 137, and asparagine 149. ATP-binding positions include 169–170 and 211–217; these read TD and TGGMSTK. The PUA domain occupies 275–353; that stretch reads AGEITVDEGA…QEIDAILGYE (79 aa).

Belongs to the glutamate 5-kinase family.

The protein resides in the cytoplasm. It carries out the reaction L-glutamate + ATP = L-glutamyl 5-phosphate + ADP. Its pathway is amino-acid biosynthesis; L-proline biosynthesis; L-glutamate 5-semialdehyde from L-glutamate: step 1/2. Its function is as follows. Catalyzes the transfer of a phosphate group to glutamate to form L-glutamate 5-phosphate. The chain is Glutamate 5-kinase from Escherichia coli O81 (strain ED1a).